The primary structure comprises 203 residues: Cardiotrophin-2 (203 aa).

A signal peptide spans 1 to 21 (MSCSLARLCLLTLLSPPLSSA). N-linked (GlcNAc...) asparagine glycosylation occurs at asparagine 43.

This sequence belongs to the IL-6 superfamily.

The protein resides in the secreted. May have an important role in neuronal precursor development and maturation. This chain is Cardiotrophin-2 (CTF2), found in Pan troglodytes (Chimpanzee).